Reading from the N-terminus, the 62-residue chain is MLAAFQLTVLALIATSFLMVIGVPVIFASPEGWVKSKNFVFSGALLWISLVFAVGILNSFVV.

Transmembrane regions (helical) follow at residues 8 to 28 (TVLA…VIFA) and 41 to 61 (FSGA…NSFV).

Belongs to the PsbZ family. As to quaternary structure, PSII is composed of 1 copy each of membrane proteins PsbA, PsbB, PsbC, PsbD, PsbE, PsbF, PsbH, PsbI, PsbJ, PsbK, PsbL, PsbM, PsbT, PsbY, PsbZ, Psb30/Ycf12, at least 3 peripheral proteins of the oxygen-evolving complex and a large number of cofactors. It forms dimeric complexes.

Its subcellular location is the plastid. It is found in the chloroplast thylakoid membrane. In terms of biological role, may control the interaction of photosystem II (PSII) cores with the light-harvesting antenna, regulates electron flow through the 2 photosystem reaction centers. PSII is a light-driven water plastoquinone oxidoreductase, using light energy to abstract electrons from H(2)O, generating a proton gradient subsequently used for ATP formation. The sequence is that of Photosystem II reaction center protein Z from Mesostigma viride (Green alga).